Reading from the N-terminus, the 599-residue chain is Laccase-2 (599 aa).

The N-terminal stretch at 1-19 (MARSTTSLFALSLVASAFA) is a signal peptide. 2 Plastocyanin-like domains span residues 21–145 (VVDY…IVIY) and 157–307 (VDDE…LVYE). The Cu cation site is built by H82, H84, H127, and H129. Residues C103 and C588 are joined by a disulfide bond. Residues N207, N208, N231, N397, and N443 are each glycosylated (N-linked (GlcNAc...) asparagine). The region spanning 450–567 (DVPTLLKILT…EGFAMVFAEA (118 aa)) is the Plastocyanin-like 3 domain. Residues H497, H500, H502, H549, C550, H551, and H555 each coordinate Cu cation.

The protein belongs to the multicopper oxidase family. In terms of assembly, homodimer. Cu cation serves as cofactor. In terms of tissue distribution, in mycelia, at a lower level than LCC4.

The protein resides in the secreted. It catalyses the reaction 4 hydroquinone + O2 = 4 benzosemiquinone + 2 H2O. In terms of biological role, lignin degradation and detoxification of lignin-derived products. The polypeptide is Laccase-2 (LCC2) (Thanatephorus cucumeris (Black scurf of potato)).